Here is a 37-residue protein sequence, read N- to C-terminus: Mating pheromone Er-20 (37 aa).

Cystine bridges form between Cys-3–Cys-18, Cys-10–Cys-32, and Cys-15–Cys-24.

As to quaternary structure, homodimer.

It localises to the secreted. Its function is as follows. Mating ciliate pheromones (or gamones) are diffusible extracellular communication signals that distinguish different intraspecific classes of cells commonly referred to as 'mating types'. They prepare the latter for conjugation by changing their cell surface properties. In Euplotes raikovi, this protein is Mating pheromone Er-20 (MAT20).